The chain runs to 260 residues: Small ribosomal subunit protein uS2 (260 aa).

Belongs to the universal ribosomal protein uS2 family.

The protein is Small ribosomal subunit protein uS2 of Roseobacter denitrificans (strain ATCC 33942 / OCh 114) (Erythrobacter sp. (strain OCh 114)).